Here is a 439-residue protein sequence, read N- to C-terminus: NAD-dependent malic enzyme 1 (439 aa).

The ACT domain occupies 9-84 (TLMIETPSVP…GIRLHTVSDE (76 aa)). Catalysis depends on Tyr112, which acts as the Proton donor. The Proton acceptor role is filled by Lys167. A divalent metal cation is bound by residues Glu209, Asp210, and Asp235. Residues 268–271 (LGAA), Asn347, and Asn373 contribute to the NAD(+) site.

Belongs to the malic enzymes family. The cofactor is Mg(2+). Mn(2+) is required as a cofactor.

It carries out the reaction (S)-malate + NAD(+) = pyruvate + CO2 + NADH. The catalysed reaction is oxaloacetate + H(+) = pyruvate + CO2. Its function is as follows. Catalyzes the decarboxylation of malate to pyruvate. Is specific for NAD, cannot use NADP. Can also catalyze the decarboxylation of oxaloacetate. Involved in keeping the ATP levels high. This is NAD-dependent malic enzyme 1 from Bacillus subtilis (strain 168).